The chain runs to 471 residues: 3-isopropylmalate dehydratase large subunit (471 aa).

The [4Fe-4S] cluster site is built by cysteine 351, cysteine 412, and cysteine 415.

It belongs to the aconitase/IPM isomerase family. LeuC type 1 subfamily. Heterodimer of LeuC and LeuD. The cofactor is [4Fe-4S] cluster.

It catalyses the reaction (2R,3S)-3-isopropylmalate = (2S)-2-isopropylmalate. It participates in amino-acid biosynthesis; L-leucine biosynthesis; L-leucine from 3-methyl-2-oxobutanoate: step 2/4. Functionally, catalyzes the isomerization between 2-isopropylmalate and 3-isopropylmalate, via the formation of 2-isopropylmaleate. The protein is 3-isopropylmalate dehydratase large subunit of Hahella chejuensis (strain KCTC 2396).